A 282-amino-acid chain; its full sequence is Nucleotide-binding protein PXO_02223 (282 aa).

Residue 5 to 12 (GLSGSGKS) participates in ATP binding. 57-60 (DVRS) provides a ligand contact to GTP.

This sequence belongs to the RapZ-like family.

In terms of biological role, displays ATPase and GTPase activities. The sequence is that of Nucleotide-binding protein PXO_02223 from Xanthomonas oryzae pv. oryzae (strain PXO99A).